Reading from the N-terminus, the 42-residue chain is Delta-hexatoxin-Hv1a (42 aa).

4 disulfides stabilise this stretch: Cys-1/Cys-15, Cys-8/Cys-20, Cys-14/Cys-31, and Cys-16/Cys-42.

The protein belongs to the neurotoxin 06 (delta-actx) family. Expressed by the venom gland.

Its subcellular location is the secreted. In terms of biological role, inhibits tetrodotoxin-sensitive voltage-gated sodium channels (Nav) by binding to site 3. Slows the inactivation, and causes a prolongation of action potential duration resulting in repetitive firing in autonomic and motor nerve fibers. Does not depolarize the resting potential. Does not affect tetrodotoxin-resistant sodium channels. This lethal neurotoxin is active on both insect and mammalian voltage-gated sodium channels. Pan-neuronal expression in Drosophila is lethal but flies engineered to express the toxin only in pacemaker neurons have profound defects in circadian rhythm but a normal lifespan. This is Delta-hexatoxin-Hv1a from Hadronyche versuta (Blue mountains funnel-web spider).